Consider the following 361-residue polypeptide: Divinyl chlorophyll a/b light-harvesting protein PcbE (361 aa).

A run of 6 helical transmembrane segments spans residues 27–47 (FIGS…ANTL), 88–108 (VAFV…AGLL), 149–169 (FILG…VEWA), 210–230 (VMGG…FHIA), 250–270 (AVLS…AFWC), and 315–335 (LSNV…WHAI).

Belongs to the PsbB/PsbC family. IsiA/Pcb subfamily. In terms of assembly, the antenna complex consists of divinyl chlorophylls (a and b) and divinyl chlorophyll a/b binding proteins and binds more divinyl chlorophyll b than does the antenna complex from high-light-adapted Prochlorococcus. It depends on divinyl chlorophyll a as a cofactor. Divinyl chlorophyll b is required as a cofactor.

The protein localises to the cellular thylakoid membrane. Its function is as follows. The antenna complex functions as a light receptor, it captures and delivers excitation energy to photosystems II and I. The Prochlorales pcb genes are not related to higher plant LHCs. The protein is Divinyl chlorophyll a/b light-harvesting protein PcbE (pcbE) of Prochlorococcus marinus (strain SARG / CCMP1375 / SS120).